The following is a 113-amino-acid chain: UPF0122 protein Sez_1013 (113 aa).

This sequence belongs to the UPF0122 family.

In terms of biological role, might take part in the signal recognition particle (SRP) pathway. This is inferred from the conservation of its genetic proximity to ftsY/ffh. May be a regulatory protein. This chain is UPF0122 protein Sez_1013, found in Streptococcus equi subsp. zooepidemicus (strain MGCS10565).